Here is a 204-residue protein sequence, read N- to C-terminus: Probable nicotinate-nucleotide adenylyltransferase (204 aa).

Belongs to the NadD family.

The enzyme catalyses nicotinate beta-D-ribonucleotide + ATP + H(+) = deamido-NAD(+) + diphosphate. It participates in cofactor biosynthesis; NAD(+) biosynthesis; deamido-NAD(+) from nicotinate D-ribonucleotide: step 1/1. Catalyzes the reversible adenylation of nicotinate mononucleotide (NaMN) to nicotinic acid adenine dinucleotide (NaAD). This chain is Probable nicotinate-nucleotide adenylyltransferase, found in Clostridium beijerinckii (strain ATCC 51743 / NCIMB 8052) (Clostridium acetobutylicum).